The sequence spans 754 residues: Fibronectin type III domain-containing protein 1 (754 aa).

The first 19 residues, 1–19 (MKSWISISFLCMLFPLSNG), serve as a signal peptide directing secretion. Disordered regions lie at residues 40–61 (SLQG…SQGG), 85–106 (AQIS…TQFS), and 130–163 (AQHS…AQSG). Low complexity predominate over residues 130 to 161 (AQHSQAGAQGSQFPQSAAHTAQHHQGTAQPAQ). Fibronectin type-III domains lie at 250–355 (PPQS…TPDL), 359–449 (APLN…TDKF), 453–545 (APRN…TKMD), 549–642 (EPMS…LPKP), and 645–742 (LVPN…SFPG). Residues 731–754 (SNLSSQQFSFPGQQVGQQQSNPWI) form a disordered region.

Prismatic layer of shell (at protein level). Expressed primarily in the mantle with highest level in the outer epithelium of the mantle edge and lower level in the mantle pallium.

It is found in the secreted. The chain is Fibronectin type III domain-containing protein 1 from Margaritifera margaritifera (Freshwater pearl mussel).